Consider the following 359-residue polypeptide: Endoglucanase 1 (359 aa).

Disordered stretches follow at residues 1–26 (MENP…RGGR) and 47–72 (TGAS…DAGT). Over residues 13 to 24 (LRRRRSERRARG) the composition is skewed to basic residues. The span at 60 to 72 (APSADSGTADAGT) shows a compositional bias: low complexity. The active site involves aspartate 154. Cysteines 155 and 199 form a disulfide. The Proton donor role is filled by aspartate 192. The active-site Nucleophile is the aspartate 339.

It belongs to the glycosyl hydrolase 6 (cellulase B) family.

It carries out the reaction Endohydrolysis of (1-&gt;4)-beta-D-glucosidic linkages in cellulose, lichenin and cereal beta-D-glucans.. CMCase I preferentially hydrolyzes carboxymethyl cellulose (CMC). The sequence is that of Endoglucanase 1 (casA) from Streptomyces sp. (strain KSM-9).